Reading from the N-terminus, the 266-residue chain is Putative carbamate hydrolase RutD (266 aa).

One can recognise an AB hydrolase-1 domain in the interval 15-239 (PVVVLSAGLG…RVEMPWGGHA (225 aa)).

Belongs to the AB hydrolase superfamily. Hydrolase RutD family.

The enzyme catalyses carbamate + 2 H(+) = NH4(+) + CO2. Its function is as follows. Involved in pyrimidine catabolism. May facilitate the hydrolysis of carbamate, a reaction that can also occur spontaneously. This is Putative carbamate hydrolase RutD from Klebsiella variicola (strain At-22).